A 1193-amino-acid chain; its full sequence is Kinesin-related protein 3 (1193 aa).

Residues 3-329 (SIRVVCRFRP…LRFGSRAKNI (327 aa)) form the Kinesin motor domain. 85 to 92 (GQTGSGKT) lines the ATP pocket. Disordered regions lie at residues 377–429 (KSSG…SSNV), 573–600 (SSIASLVPSTPKSSAEMDPLATASKHAD), 611–630 (LLQRTPSKAVGSSKSNTATS), 638–665 (ISESDNIGSGATTTTNNNNATITPATSS), 973–1016 (GGGG…SANL), 1032–1114 (KAEP…PVKI), and 1127–1193 (FKKK…QQKD). Residues 405–429 (SSNLSNSVNSTSNLNTSSNTSSSNV) are compositionally biased toward low complexity. Residues 450-962 (ELIKVLQEKC…SQVGVDAQNT (513 aa)) are a coiled coil. Composition is skewed to polar residues over residues 573–585 (SSIASLVPSTPKS) and 614–630 (RTPSKAVGSSKSNTATS). Composition is skewed to low complexity over residues 643-665 (NIGSGATTTTNNNNATITPATSS) and 985-1006 (HSSSSSTSSSSALNHSSINNNH). The span at 1007-1016 (TTPTPLSANL) shows a compositional bias: polar residues. Composition is skewed to low complexity over residues 1044–1078 (NTSIPSSPNHTSSNNINNNSNNNNNNNNNNNIGNS), 1086–1109 (NNNSSISNSNNNSSSNLNANLNGN), and 1132–1149 (PSSTPPSSTNNLSPQSPQ). 2 stretches are compositionally biased toward polar residues: residues 1150–1165 (TPSHLSADGSGNISPN) and 1174–1193 (FSYTPAVVTSSTINKDQQKD).

The protein belongs to the TRAFAC class myosin-kinesin ATPase superfamily. Kinesin family. Kinesin subfamily. In terms of assembly, dimer.

It is found in the cytoplasm. It localises to the cytoskeleton. In terms of biological role, microtubule-associated force-producing protein that plays a role in organelle transport. Its motor activity is directed toward the microtubule's plus end. The maximal velocity in an inverted motility assay (moving microtubules on fixed motors) was 1.96 um/s. The chain is Kinesin-related protein 3 (kif3) from Dictyostelium discoideum (Social amoeba).